A 461-amino-acid polypeptide reads, in one-letter code: Phosphoglucosamine mutase (461 aa).

Residue Ser118 is the Phosphoserine intermediate of the active site. Positions 118, 255, 257, and 259 each coordinate Mg(2+). Phosphoserine is present on Ser118.

This sequence belongs to the phosphohexose mutase family. Mg(2+) is required as a cofactor. In terms of processing, activated by phosphorylation.

It carries out the reaction alpha-D-glucosamine 1-phosphate = D-glucosamine 6-phosphate. Catalyzes the conversion of glucosamine-6-phosphate to glucosamine-1-phosphate. The protein is Phosphoglucosamine mutase of Acidothermus cellulolyticus (strain ATCC 43068 / DSM 8971 / 11B).